A 303-amino-acid polypeptide reads, in one-letter code: Movement protein (303 aa).

This sequence belongs to the tobamovirus movement protein family.

The protein resides in the host cytoplasm. It is found in the host cytoskeleton. It localises to the host cell junction. Its subcellular location is the host plasmodesma. Functionally, transports viral genome to neighboring plant cells directly through plasmosdesmata, without any budding. The movement protein allows efficient cell to cell propagation, by bypassing the host cell wall barrier. Forms a ribonucleoprotein complex with viral RNA. Binds microtubules and modulates microtubule stability. Can bind double-stranded DNA. In Cymbidium (ORSV), this protein is Movement protein (MP).